A 345-amino-acid polypeptide reads, in one-letter code: Phenylalanine--tRNA ligase alpha subunit (345 aa).

Glu266 contacts Mg(2+).

Belongs to the class-II aminoacyl-tRNA synthetase family. Phe-tRNA synthetase alpha subunit type 1 subfamily. As to quaternary structure, tetramer of two alpha and two beta subunits. Mg(2+) serves as cofactor.

It is found in the cytoplasm. The catalysed reaction is tRNA(Phe) + L-phenylalanine + ATP = L-phenylalanyl-tRNA(Phe) + AMP + diphosphate + H(+). The chain is Phenylalanine--tRNA ligase alpha subunit from Methylibium petroleiphilum (strain ATCC BAA-1232 / LMG 22953 / PM1).